A 382-amino-acid polypeptide reads, in one-letter code: Lactaldehyde reductase (382 aa).

NAD(+)-binding positions include D38, N70, G97–S98, T139–T143, N150, K161, and M180–M184. Fe cation contacts are provided by D195, H199, H262, and H276.

The protein belongs to the iron-containing alcohol dehydrogenase family. In terms of assembly, homodimer. The cofactor is Fe cation.

The catalysed reaction is (R)-propane-1,2-diol + NAD(+) = (R)-lactaldehyde + NADH + H(+). It catalyses the reaction (S)-propane-1,2-diol + NAD(+) = (S)-lactaldehyde + NADH + H(+). The protein operates within carbohydrate degradation; L-fucose degradation. The protein is Lactaldehyde reductase (fucO) of Escherichia coli O157:H7.